The following is a 568-amino-acid chain: Periplasmic trehalase (568 aa).

The signal sequence occupies residues 1–39 (MPYATARSGDVMSSAAPPCCTSLLGLSLSMFVAPGTLTA). Residues R169, 176–177 (WD), N213, 222–224 (RSQ), 294–296 (RPE), and G327 each bind substrate. Catalysis depends on proton donor/acceptor residues D329 and E511. E526 contacts substrate.

This sequence belongs to the glycosyl hydrolase 37 family.

The protein resides in the periplasm. It catalyses the reaction alpha,alpha-trehalose + H2O = alpha-D-glucose + beta-D-glucose. Its function is as follows. Provides the cells with the ability to utilize trehalose at high osmolarity by splitting it into glucose molecules that can subsequently be taken up by the phosphotransferase-mediated uptake system. This is Periplasmic trehalase from Xanthomonas axonopodis pv. citri (strain 306).